The primary structure comprises 86 residues: Parvalbumin beta 3 (86 aa).

Residue Ala1 is modified to N-acetylalanine. The region spanning 35 to 70 (LSPEEVKKFFAIIDQDHSGFIEEEELKLFLQTFSAG) is the EF-hand domain. The Ca(2+) site is built by Asp48, Asp50, Ser52, Phe54, Glu56, and Glu59.

Belongs to the parvalbumin family.

In terms of biological role, in muscle, parvalbumin is thought to be involved in relaxation after contraction. It binds two calcium ions. This Merluccius hubbsi (Argentine hake) protein is Parvalbumin beta 3.